The chain runs to 285 residues: Bifunctional protein FolD (285 aa).

Residues 165–167 (GRS), S190, and I231 each bind NADP(+).

This sequence belongs to the tetrahydrofolate dehydrogenase/cyclohydrolase family. As to quaternary structure, homodimer.

It carries out the reaction (6R)-5,10-methylene-5,6,7,8-tetrahydrofolate + NADP(+) = (6R)-5,10-methenyltetrahydrofolate + NADPH. The enzyme catalyses (6R)-5,10-methenyltetrahydrofolate + H2O = (6R)-10-formyltetrahydrofolate + H(+). The protein operates within one-carbon metabolism; tetrahydrofolate interconversion. Functionally, catalyzes the oxidation of 5,10-methylenetetrahydrofolate to 5,10-methenyltetrahydrofolate and then the hydrolysis of 5,10-methenyltetrahydrofolate to 10-formyltetrahydrofolate. In Magnetococcus marinus (strain ATCC BAA-1437 / JCM 17883 / MC-1), this protein is Bifunctional protein FolD.